Reading from the N-terminus, the 305-residue chain is MDLSGVKKKSLLGVKENNKKSSTRAPSPTKRKDRSDEKSKDRSKDKGATKESSEKDRGRDKTRKRRSASSGSSSTRSRSSSTSSSGSSTSTGSSSGSSSSSASSRSGSSSTSRSSSSSSSSGSPSPSRRRHDNRRRSRSKSKPPKRDEKERKRRSPSPKPTKVHIGRLTRNVTKDHIMEIFSTYGKIKMIDMPVERMHPHLSKGYAYVEFENPDEAEKALKHMDGGQIDGQEITATAVLAPWPRPPPRRFSPPRRMLPPPPMWRRSPPRMRRRSRSPRRRSPVRRRSRSPGRRRHRSRSSSNSSR.

Positions 1–10 (MDLSGVKKKS) are enriched in basic residues. Residues 1–161 (MDLSGVKKKS…KRRSPSPKPT (161 aa)) are necessary for interaction with SRP54, nuclear localization and exon-skipping. Residues 1–170 (MDLSGVKKKS…TKVHIGRLTR (170 aa)) form a disordered region. A necessary for interaction with the cleaved p110 isoform of CDC2L1 region spans residues 1-220 (MDLSGVKKKS…ENPDEAEKAL (220 aa)). Glycyl lysine isopeptide (Lys-Gly) (interchain with G-Cter in SUMO2) cross-links involve residues lysine 7 and lysine 15. The span at 33–59 (DRSDEKSKDRSKDKGATKESSEKDRGR) shows a compositional bias: basic and acidic residues. Serine 53 is modified (phosphoserine; by CK2). The segment covering 68–126 (ASSGSSSTRSRSSSTSSSGSSTSTGSSSGSSSSSASSRSGSSSTSRSSSSSSSSGSPSP) has biased composition (low complexity). Residues 69-121 (SSGSSSTRSRSSSTSSSGSSTSTGSSSGSSSSSASSRSGSSSTSRSSSSSSSS) are necessary for interactions with UPF2 and UPF3B and UPF2-dependent NMD. 2 stretches are compositionally biased toward basic residues: residues 127–143 (SRRR…KSKP) and 151–167 (RKRR…HIGR). Phosphoserine occurs at positions 155 and 157. Positions 156-242 (PSPKPTKVHI…ITATAVLAPW (87 aa)) are necessary for interaction with PNN and exon-skipping. The segment at 159–244 (KPTKVHIGRL…ATAVLAPWPR (86 aa)) is interaction with SAP18 and ACIN1. Threonine 161 carries the phosphothreonine modification. Positions 161-240 (TKVHIGRLTR…QEITATAVLA (80 aa)) constitute an RRM domain. An N6-acetyllysine modification is found at lysine 218. The tract at residues 238 to 305 (VLAPWPRPPP…RSRSSSNSSR (68 aa)) is necessary for interaction with TRA2B, nuclear localization and exon-skipping. Residues 240 to 305 (APWPRPPPRR…RSRSSSNSSR (66 aa)) form a disordered region. The span at 242–262 (WPRPPPRRFSPPRRMLPPPPM) shows a compositional bias: pro residues. A compositionally biased stretch (basic residues) spans 266–298 (SPPRMRRRSRSPRRRSPVRRRSRSPGRRRHRSR).

This sequence belongs to the splicing factor SR family. As to quaternary structure, found in mRNA splicing-dependent exon junction complexes (EJC). Found in a post-splicing complex with NXF1, RBM8A, UPF1, UPF2, UPF3A, UPF3B and RNPS1. Component of the heterotrimeric ASAP (apoptosis- and splicing-associated protein) and PSAP complexes consisting of RNPS1, SAP18 and either ACIN1 or PNN, respectively; the ASAP and PSAP complexes probably are formed mutually exclusive. Component of the active spliceosome. Associates with polysomes. Interacts with the cleaved p110 isoform of CDC2L1, CSNK2A1, PNN, SART3, SRP54, SRRM1 and TRA2B/SFRS10. In terms of processing, phosphorylated on one or more of the four Ser/Thr residues (Ser-43, Thr-49, Ser-52 or Ser-53). Ser-53 phosphorylation site is important for splicing and translation stimulation activity in vitro. Ubiquitous.

The protein resides in the nucleus. It is found in the nucleus speckle. It localises to the cytoplasm. Its function is as follows. Part of pre- and post-splicing multiprotein mRNP complexes. Auxiliary component of the splicing-dependent multiprotein exon junction complex (EJC) deposited at splice junction on mRNAs. The EJC is a dynamic structure consisting of core proteins and several peripheral nuclear and cytoplasmic associated factors that join the complex only transiently either during EJC assembly or during subsequent mRNA metabolism. Component of the ASAP and PSAP complexes which bind RNA in a sequence-independent manner and are proposed to be recruited to the EJC prior to or during the splicing process and to regulate specific excision of introns in specific transcription subsets. The ASAP complex can inhibit RNA processing during in vitro splicing reactions. The ASAP complex promotes apoptosis and is disassembled after induction of apoptosis. Enhances the formation of the ATP-dependent A complex of the spliceosome. Involved in both constitutive splicing and, in association with SRP54 and TRA2B/SFRS10, in distinctive modulation of alternative splicing in a substrate-dependent manner. Involved in the splicing modulation of BCL2L1/Bcl-X (and probably other apoptotic genes); specifically inhibits formation of proapoptotic isoforms such as Bcl-X(S); the activity is different from the established EJC assembly and function. Participates in mRNA 3'-end cleavage. Involved in UPF2-dependent nonsense-mediated decay (NMD) of mRNAs containing premature stop codons. Also mediates increase of mRNA abundance and translational efficiency. Binds spliced mRNA 20-25 nt upstream of exon-exon junctions. This chain is RNA-binding protein with serine-rich domain 1 (RNPS1), found in Homo sapiens (Human).